The sequence spans 603 residues: Deuterosome assembly protein 1 (603 aa).

Coiled-coil stretches lie at residues 14–59 (CEAE…NAQT), 85–197 (MTQN…GKKQ), 227–278 (IEKL…ELQS), 336–399 (QDQP…KQLK), and 454–480 (HTSI…NGKS). Ser546 carries the phosphoserine modification. Residues 557-600 (AAQHFLLEEEKRAKELEKLLNTHIDELQRHTEFTLNKYSKLKQN) adopt a coiled-coil conformation.

The protein belongs to the CEP63 family. As to quaternary structure, interacts with CEP152; the interaction is mutually exclusive with CEP63.

Its subcellular location is the cytoplasm. In terms of biological role, key structural component of the deuterosome, a structure that promotes de novo centriole amplification in multiciliated cells. Deuterosome-mediated centriole amplification occurs in terminally differentiated multiciliated cells and can generate more than 100 centrioles. Probably sufficient for the specification and formation of the deuterosome inner core. Interacts with CEP152 and recruits PLK4 to activate centriole biogenesis. In Macaca fascicularis (Crab-eating macaque), this protein is Deuterosome assembly protein 1.